A 309-amino-acid polypeptide reads, in one-letter code: D-alanine--D-alanine ligase (309 aa).

One can recognise an ATP-grasp domain in the interval 104-301 (KQIWQGSDLP…FDALCVEILA (198 aa)). 130 to 185 (VASLGLPVIIKPVHEGSSIGMSKVEKIEDFAPAIEKATAHDAIVMAEKWITGREYT) serves as a coordination point for ATP. The Mg(2+) site is built by aspartate 255, glutamate 268, and asparagine 270.

It belongs to the D-alanine--D-alanine ligase family. It depends on Mg(2+) as a cofactor. Mn(2+) serves as cofactor.

It is found in the cytoplasm. The catalysed reaction is 2 D-alanine + ATP = D-alanyl-D-alanine + ADP + phosphate + H(+). It participates in cell wall biogenesis; peptidoglycan biosynthesis. Cell wall formation. The chain is D-alanine--D-alanine ligase from Acinetobacter baylyi (strain ATCC 33305 / BD413 / ADP1).